A 198-amino-acid polypeptide reads, in one-letter code: Glycerol-3-phosphate acyltransferase (198 aa).

6 helical membrane-spanning segments follow: residues 1–21 (MNLLILFFGYLFGSFPSGYLA), 55–75 (VFLLDVFKGVLSILLAKYLLL), 79–99 (WQVAVGLSTLIGHIWPVWLNW), 111–131 (IFLGLSWQVGLATLGVFIIMI), 136–156 (IVSLASVSASLALPLIMFLSF), and 158–178 (GSNLSLPFLIVSLLAMILVIW).

This sequence belongs to the PlsY family. In terms of assembly, probably interacts with PlsX.

It is found in the cell inner membrane. The enzyme catalyses an acyl phosphate + sn-glycerol 3-phosphate = a 1-acyl-sn-glycero-3-phosphate + phosphate. It functions in the pathway lipid metabolism; phospholipid metabolism. Catalyzes the transfer of an acyl group from acyl-phosphate (acyl-PO(4)) to glycerol-3-phosphate (G3P) to form lysophosphatidic acid (LPA). This enzyme utilizes acyl-phosphate as fatty acyl donor, but not acyl-CoA or acyl-ACP. This Prochlorococcus marinus (strain NATL2A) protein is Glycerol-3-phosphate acyltransferase.